A 147-amino-acid polypeptide reads, in one-letter code: Hemoglobin subunit beta-1 (147 aa).

The residue at position 2 (valine 2) is an N-acetylvaline. Residues histidine 3–histidine 147 enclose the Globin domain. N6-succinyllysine is present on lysine 18. A phosphoserine mark is found at serine 45, serine 51, and serine 53. Lysine 60 carries the post-translational modification N6-succinyllysine. The heme b site is built by histidine 64 and histidine 93. Arginine 105 is subject to Asymmetric dimethylarginine. Threonine 124 is subject to Phosphothreonine.

This sequence belongs to the globin family. As to quaternary structure, heterotetramer of two alpha chains and two beta chains. In terms of tissue distribution, red blood cells.

Its function is as follows. Involved in oxygen transport from the lung to the various peripheral tissues. The chain is Hemoglobin subunit beta-1 (Hbb) from Rattus norvegicus (Rat).